The following is a 1060-amino-acid chain: Carbamoyl phosphate synthase large chain (1060 aa).

A carboxyphosphate synthetic domain region spans residues 1 to 401 (MPKRQDIHKI…SLLKAVRSLE (401 aa)). 12 residues coordinate ATP: arginine 129, arginine 169, glycine 175, glycine 176, arginine 208, isoleucine 210, glutamate 215, glycine 241, valine 242, histidine 243, glutamine 284, and glutamate 298. Residues 133 to 327 (KNLMQKLHEP…IAKMAAKIAV (195 aa)) enclose the ATP-grasp 1 domain. Mg(2+) contacts are provided by glutamine 284, glutamate 298, and asparagine 300. Residues glutamine 284, glutamate 298, and asparagine 300 each coordinate Mn(2+). Residues 402–546 (VGLIHPERPA…YSTYESSTES (145 aa)) form an oligomerization domain region. Residues 547 to 929 (VKSDKPSVLV…ALYKAFEAAG (383 aa)) are carbamoyl phosphate synthetic domain. One can recognise an ATP-grasp 2 domain in the interval 671–861 (DQVIKSLKLP…LAQVATLAIL (191 aa)). 10 residues coordinate ATP: arginine 707, histidine 746, leucine 748, glutamate 752, glycine 777, isoleucine 778, histidine 779, serine 780, glutamine 820, and glutamate 832. 3 residues coordinate Mg(2+): glutamine 820, glutamate 832, and asparagine 834. The Mn(2+) site is built by glutamine 820, glutamate 832, and asparagine 834. Positions 930–1060 (MHLPQFGRAL…QAFSISPIKS (131 aa)) constitute an MGS-like domain. The segment at 930–1060 (MHLPQFGRAL…QAFSISPIKS (131 aa)) is allosteric domain.

The protein belongs to the CarB family. Composed of two chains; the small (or glutamine) chain promotes the hydrolysis of glutamine to ammonia, which is used by the large (or ammonia) chain to synthesize carbamoyl phosphate. Tetramer of heterodimers (alpha,beta)4. Mg(2+) is required as a cofactor. It depends on Mn(2+) as a cofactor.

The catalysed reaction is hydrogencarbonate + L-glutamine + 2 ATP + H2O = carbamoyl phosphate + L-glutamate + 2 ADP + phosphate + 2 H(+). The enzyme catalyses hydrogencarbonate + NH4(+) + 2 ATP = carbamoyl phosphate + 2 ADP + phosphate + 2 H(+). It participates in amino-acid biosynthesis; L-arginine biosynthesis; carbamoyl phosphate from bicarbonate: step 1/1. Its pathway is pyrimidine metabolism; UMP biosynthesis via de novo pathway; (S)-dihydroorotate from bicarbonate: step 1/3. In terms of biological role, large subunit of the glutamine-dependent carbamoyl phosphate synthetase (CPSase). CPSase catalyzes the formation of carbamoyl phosphate from the ammonia moiety of glutamine, carbonate, and phosphate donated by ATP, constituting the first step of 2 biosynthetic pathways, one leading to arginine and/or urea and the other to pyrimidine nucleotides. The large subunit (synthetase) binds the substrates ammonia (free or transferred from glutamine from the small subunit), hydrogencarbonate and ATP and carries out an ATP-coupled ligase reaction, activating hydrogencarbonate by forming carboxy phosphate which reacts with ammonia to form carbamoyl phosphate. The polypeptide is Carbamoyl phosphate synthase large chain (Lacticaseibacillus casei (strain BL23) (Lactobacillus casei)).